Reading from the N-terminus, the 988-residue chain is Bifunctional glutamine synthetase adenylyltransferase/adenylyl-removing enzyme (988 aa).

The interval M1–P474 is adenylyl removase. The interval L480–E988 is adenylyl transferase.

Belongs to the GlnE family. Mg(2+) serves as cofactor.

The catalysed reaction is [glutamine synthetase]-O(4)-(5'-adenylyl)-L-tyrosine + phosphate = [glutamine synthetase]-L-tyrosine + ADP. The enzyme catalyses [glutamine synthetase]-L-tyrosine + ATP = [glutamine synthetase]-O(4)-(5'-adenylyl)-L-tyrosine + diphosphate. Involved in the regulation of glutamine synthetase GlnA, a key enzyme in the process to assimilate ammonia. When cellular nitrogen levels are high, the C-terminal adenylyl transferase (AT) inactivates GlnA by covalent transfer of an adenylyl group from ATP to specific tyrosine residue of GlnA, thus reducing its activity. Conversely, when nitrogen levels are low, the N-terminal adenylyl removase (AR) activates GlnA by removing the adenylyl group by phosphorolysis, increasing its activity. The regulatory region of GlnE binds the signal transduction protein PII (GlnB) which indicates the nitrogen status of the cell. The chain is Bifunctional glutamine synthetase adenylyltransferase/adenylyl-removing enzyme from Rhodopseudomonas palustris (strain HaA2).